Here is a 202-residue protein sequence, read N- to C-terminus: uncharacterized protein (202 aa).

One can recognise an HTH tetR-type domain in the interval 13-73 (ELAADRILDA…AYVHRETRRL (61 aa)). Positions 36–55 (GMNEIAKAAGCSRATLYRYF) form a DNA-binding region, H-T-H motif.

This is an uncharacterized protein from Mycobacterium tuberculosis (strain CDC 1551 / Oshkosh).